The sequence spans 86 residues: MDGHDSEDTKQSTADMTAFVQNLLQQMQTRFQTMSDSIITKIDDMGGRINELEQSINDLRAEMGVEGTPPPASKSGDEPKTPASSS.

Residues 34–63 adopt a coiled-coil conformation; the sequence is MSDSIITKIDDMGGRINELEQSINDLRAEM. Residues 42–52 form a required for interactions with heat shock factors (HSFs) region; it reads IDDMGGRINEL. A disordered region spans residues 59–86; the sequence is LRAEMGVEGTPPPASKSGDEPKTPASSS.

It belongs to the HSBP1 family. As to quaternary structure, homohexamer. Interacts with HSFA1A, HSFA1B and HSFA2. Mostly expressed in siliques and flowers, and, to a lower extent, in roots, stems and leaves.

It is found in the nucleus. The protein resides in the cytoplasm. It localises to the cytosol. Functionally, negative regulator of the heat shock (HS) response. Affects negatively HSFA1B DNA-binding capacity in vitro. Involved in acquired thermotolerance but not basal thermotolerance. Crucial for seed development, after fertilization and during embryogenesis. The polypeptide is Heat shock factor-binding protein (Arabidopsis thaliana (Mouse-ear cress)).